Consider the following 108-residue polypeptide: Nucleoid-associated protein CPS_3743 (108 aa).

The interval 87–108 (NKDKMGALTGGMQLPPGMKMPF) is disordered.

The protein belongs to the YbaB/EbfC family. In terms of assembly, homodimer.

It localises to the cytoplasm. The protein localises to the nucleoid. Functionally, binds to DNA and alters its conformation. May be involved in regulation of gene expression, nucleoid organization and DNA protection. In Colwellia psychrerythraea (strain 34H / ATCC BAA-681) (Vibrio psychroerythus), this protein is Nucleoid-associated protein CPS_3743.